Consider the following 1216-residue polypeptide: 1-phosphatidylinositol 4,5-bisphosphate phosphodiesterase beta-1 (1216 aa).

Cysteine 17 is lipidated: S-palmitoyl cysteine. Serine 236 carries the post-translational modification Phosphoserine. A PI-PLC X-box domain is found at 316–467 (EDMSQPLSHY…LMYKILVKNK (152 aa)). Residues histidine 331 and histidine 378 contribute to the active site. Serine 417 carries the phosphoserine modification. Residues 469–534 (KSHKSSEGSG…MDEGTAGSEA (66 aa)) are disordered. Over residues 472–483 (KSSEGSGKKKLS) the composition is skewed to basic and acidic residues. Positions 491–501 (SDSSSVFEPSS) are enriched in low complexity. A compositionally biased stretch (acidic residues) spans 507–518 (ADTESDDDDDDD). Threonine 509 is modified (phosphothreonine). A phosphoserine mark is found at serine 511 and serine 582. In terms of domain architecture, PI-PLC Y-box spans 540–656 (MSNLVNYIQP…GYRLKPEFMR (117 aa)). Residues 656-784 (RRPDKHFDPF…CLRNERNQPL (129 aa)) enclose the C2 domain. Disordered stretches follow at residues 834-891 (DEEE…VKAP), 933-993 (LVKR…IEQD), 1071-1095 (KMDKKRQEKITEAKSKDKSQMEEEK), and 1172-1216 (KISE…DTPL). Residue serine 887 is modified to Phosphoserine; by PKC. Basic and acidic residues-rich tracts occupy residues 941–951 (TTDLIKEHTTK) and 959–979 (YLRRRAALEKTAKKDNKKKSE). Residues serine 978 and serine 987 each carry the phosphoserine modification. Residues 980 to 991 (PSSPDHVSSTIE) are compositionally biased toward polar residues. Residues 1075–1095 (KRQEKITEAKSKDKSQMEEEK) are compositionally biased toward basic and acidic residues. Residues 1187-1198 (TSDSGKLNQKPP) show a composition bias toward polar residues. 2 positions are modified to phosphoserine: serine 1199 and serine 1200. Basic and acidic residues predominate over residues 1207–1216 (NPGKEFDTPL).

As to quaternary structure, interacts with DGKQ. It depends on Ca(2+) as a cofactor. Palmitoylated. Palmitoylation at Cys-17 by ZDHHC21 regulates the signaling activity of PLCB1 and the function of the endothelial barrier. Palmitoylation by ZDHHC21 is stimulated by inflammation.

It is found in the nucleus membrane. It localises to the cytoplasm. It catalyses the reaction a 1,2-diacyl-sn-glycero-3-phospho-(1D-myo-inositol-4,5-bisphosphate) + H2O = 1D-myo-inositol 1,4,5-trisphosphate + a 1,2-diacyl-sn-glycerol + H(+). The catalysed reaction is a 1,2-diacyl-sn-glycero-3-phospho-(1D-myo-inositol) + H2O = 1D-myo-inositol 1-phosphate + a 1,2-diacyl-sn-glycerol + H(+). Catalyzes the hydrolysis of 1-phosphatidylinositol 4,5-bisphosphate into diacylglycerol (DAG) and inositol 1,4,5-trisphosphate (IP3) and mediates intracellular signaling downstream of G protein-coupled receptors. Regulates the function of the endothelial barrier. The polypeptide is 1-phosphatidylinositol 4,5-bisphosphate phosphodiesterase beta-1 (PLCB1) (Bos taurus (Bovine)).